The primary structure comprises 464 residues: Dihydrolipoyllysine-residue succinyltransferase component of 2-oxoglutarate dehydrogenase complex 1, mitochondrial (464 aa).

Residues 1-86 constitute a mitochondrion transit peptide; that stretch reads MMLRAVFRRA…TALQRWVRPF (86 aa). One can recognise a Lipoyl-binding domain in the interval 93–168; the sequence is VVEAVVPHMG…EPGNKVARIS (76 aa). K134 bears the N6-lipoyllysine mark. A disordered region spans residues 168–242; that stretch reads STSADAVSHV…DRERRVPMTR (75 aa). The span at 196–210 shows a compositional bias: basic and acidic residues; the sequence is EKPKVESTKVAEKPK. Residues 211-220 are compositionally biased toward pro residues; that stretch reads APSPPPPPPS. Catalysis depends on residues H435 and D439.

The protein belongs to the 2-oxoacid dehydrogenase family. As to quaternary structure, forms a 24-polypeptide structural core with octahedral symmetry. Requires (R)-lipoate as cofactor.

It localises to the mitochondrion. The catalysed reaction is N(6)-[(R)-dihydrolipoyl]-L-lysyl-[protein] + succinyl-CoA = N(6)-[(R)-S(8)-succinyldihydrolipoyl]-L-lysyl-[protein] + CoA. The protein operates within amino-acid degradation; L-lysine degradation via saccharopine pathway; glutaryl-CoA from L-lysine: step 6/6. The 2-oxoglutarate dehydrogenase complex catalyzes the overall conversion of 2-oxoglutarate to succinyl-CoA and CO(2). It contains multiple copies of three enzymatic components: 2-oxoglutarate dehydrogenase (E1), dihydrolipoamide succinyltransferase (E2) and lipoamide dehydrogenase (E3). This is Dihydrolipoyllysine-residue succinyltransferase component of 2-oxoglutarate dehydrogenase complex 1, mitochondrial from Arabidopsis thaliana (Mouse-ear cress).